The primary structure comprises 262 residues: Oxidoreductase GME11367 (262 aa).

Belongs to the avfA family.

Its pathway is secondary metabolite biosynthesis. Its function is as follows. Oxidoreductase; part of the gene cluster that mediates the biosynthesis of dibenzodioxocinones such as pestalotiollide B, a novel class of inhibitors against cholesterol ester transfer protein (CEPT). The biosynthesis initiates from condensation of acetate and malonate units catalyzed by the non-reducing PKS pks8/GME11356. Pks8/GME11356 lacks a thioesterase (TE) domain, which is important to the cyclizing of the third ring of atrochrysone carboxylic acid, and the esterase GME11355 might play the role of TE and catalyzes the cyclization reaction of the C ring. The lactamase-like protein GME11357 (or other beta-lactamases in Pestalotiopsis microspora) probably hydrolyzes the thioester bond between the ACP of pks8/GME11356 and the intermediate to release atrochrysone carboxylic acid, which is spontaneously dehydrates to form endocrocin anthrone. Endocrocin anthrone is further converted to emodin via the endocrocin intermediate. Emodin is then oxidized by several enzymes such as the Baeyer-Villiger oxidase GME11358, the oxidoreductase GME11367, the short chain dehydrogenase/reductase GME11373, as well as by other oxidoreductases from the cluster, to modify the A and C rings and open the B ring, and finally yield monodictyphenone. The prenyltransferase GME11375 may catalyze the addition reaction between the C5 side chains and the carbon bone of dibenzodioxocinones. The remaining biochemical reactions to the final product dibenzodioxocinones should be methylation catalyzed by methyltransferase GME11366 and reduction and lactonization reaction catalyzed by a series of oxidordeuctases. This Pestalotiopsis microspora protein is Oxidoreductase GME11367.